We begin with the raw amino-acid sequence, 676 residues long: F420-dependent formate dehydrogenase 2 subunit alpha (676 aa).

A 4Fe-4S Mo/W bis-MGD-type domain is found at 4-60 (FKVVHTICPYCGTGCGIDLVVKDGKVVDSHPFKRHPVNEGKVCIKGNYCYEFVHSED). 4 residues coordinate [4Fe-4S] cluster: C11, C14, C18, and C46. U133 is a non-standard amino acid (selenocysteine).

It belongs to the prokaryotic molybdopterin-containing oxidoreductase family. In terms of assembly, dimer of an alpha (FdhA2) and a beta (FdhB2) subunit. [4Fe-4S] cluster is required as a cofactor. It depends on Mo-bis(molybdopterin guanine dinucleotide) as a cofactor. Zn(2+) serves as cofactor.

It catalyses the reaction oxidized coenzyme F420-(gamma-L-Glu)(n) + formate + 2 H(+) = reduced coenzyme F420-(gamma-L-Glu)(n) + CO2. Functionally, catalyzes the oxidation of formate to carbon dioxide, with coenzyme F420 as the electron acceptor. In vitro can also use methyl viologen as electron acceptor. In Methanococcus maripaludis (strain DSM 14266 / JCM 13030 / NBRC 101832 / S2 / LL), this protein is F420-dependent formate dehydrogenase 2 subunit alpha.